We begin with the raw amino-acid sequence, 200 residues long: ATP-dependent Clp protease proteolytic subunit (200 aa).

The active-site Nucleophile is the Ser103. His128 is an active-site residue.

It belongs to the peptidase S14 family. In terms of assembly, fourteen ClpP subunits assemble into 2 heptameric rings which stack back to back to give a disk-like structure with a central cavity, resembling the structure of eukaryotic proteasomes.

Its subcellular location is the cytoplasm. It catalyses the reaction Hydrolysis of proteins to small peptides in the presence of ATP and magnesium. alpha-casein is the usual test substrate. In the absence of ATP, only oligopeptides shorter than five residues are hydrolyzed (such as succinyl-Leu-Tyr-|-NHMec, and Leu-Tyr-Leu-|-Tyr-Trp, in which cleavage of the -Tyr-|-Leu- and -Tyr-|-Trp bonds also occurs).. In terms of biological role, cleaves peptides in various proteins in a process that requires ATP hydrolysis. Has a chymotrypsin-like activity. Plays a major role in the degradation of misfolded proteins. The protein is ATP-dependent Clp protease proteolytic subunit of Vibrio vulnificus (strain CMCP6).